The chain runs to 151 residues: Putative pre-16S rRNA nuclease (151 aa).

It belongs to the YqgF nuclease family.

Its subcellular location is the cytoplasm. Functionally, could be a nuclease involved in processing of the 5'-end of pre-16S rRNA. This is Putative pre-16S rRNA nuclease from Neisseria meningitidis serogroup C (strain 053442).